The sequence spans 447 residues: Succinate--CoA ligase [ADP-forming] subunit beta, mitochondrial (447 aa).

Residues 1-34 (MFKLGRNRALASAFAATSRAPLASRLPSVSQQQR) constitute a mitochondrion transit peptide. Residues 45–287 (ADLLRQYGIG…TTQEDPDEVR (243 aa)) form the ATP-grasp domain. ATP contacts are provided by residues lysine 82, 89 to 91 (GRG), and glutamate 150. Residues asparagine 242 and aspartate 256 each contribute to the Mg(2+) site. Substrate is bound by residues asparagine 307 and 364-366 (GIV).

The protein belongs to the succinate/malate CoA ligase beta subunit family. In terms of assembly, heterodimer of an alpha and a beta subunit. Mg(2+) serves as cofactor.

It is found in the mitochondrion. The catalysed reaction is succinate + ATP + CoA = succinyl-CoA + ADP + phosphate. It functions in the pathway carbohydrate metabolism; tricarboxylic acid cycle; succinate from succinyl-CoA (ligase route): step 1/1. Succinyl-CoA synthetase functions in the citric acid cycle (TCA), coupling the hydrolysis of succinyl-CoA to the synthesis of ATP and thus represents the only step of substrate-level phosphorylation in the TCA. The beta subunit provides nucleotide specificity of the enzyme and binds the substrate succinate, while the binding sites for coenzyme A and phosphate are found in the alpha subunit. The protein is Succinate--CoA ligase [ADP-forming] subunit beta, mitochondrial of Neurospora crassa (strain ATCC 24698 / 74-OR23-1A / CBS 708.71 / DSM 1257 / FGSC 987).